The following is a 423-amino-acid chain: UDP-N-acetylgalactosamine-undecaprenyl-phosphate N-acetylgalactosaminephosphotransferase (423 aa).

The Extracellular portion of the chain corresponds to 1–13 (MSYQRRHSRWYER). A helical membrane pass occupies residues 14–34 (VLFSPPSLFFLGAMLAVCLPA). Over 35-47 (LERWGWGFWEYFD) the chain is Cytoplasmic. The chain crosses the membrane as a helical span at residues 48-68 (AVRVNTLGGAFVAFLLTGIVL). The Extracellular segment spans residues 69–79 (YRFLRYPGASP). Residues 80–100 (VAYMIPTVTTLYGSLVGALFF) traverse the membrane as a helical segment. Residues 101-107 (LRLPYSR) lie on the Cytoplasmic side of the membrane. The helical transmembrane segment at 108 to 128 (QVLFESYVVALLCCWVVYFIG) threads the bilayer. Topologically, residues 129–239 (RRYRTPKYAL…IYAFIKRGMD (111 aa)) are extracellular. A helical transmembrane segment spans residues 240–260 (ILAAVIAIPLFSPLMLATAVL). Topologically, residues 261 to 423 (IKLESPGPVM…RTILTGFGAR (163 aa)) are cytoplasmic.

It belongs to the bacterial sugar transferase family.

The protein localises to the membrane. The catalysed reaction is di-trans,octa-cis-undecaprenyl phosphate + UDP-N-acetyl-alpha-D-galactosamine = N-acetyl-alpha-D-galactosaminyl-di-trans,octa-cis-undecaprenyl diphosphate + UMP. The protein operates within bacterial outer membrane biogenesis; LPS O-antigen biosynthesis. Transfers N-acetyl-galactosamine (GalNAc) to undecaprenyl phosphate, a step in the assembly of the repeating-unit of the O-antigen. Shows no activity with UDP-N-acetyl-alpha-D-glucosamine. In Aeromonas hydrophila, this protein is UDP-N-acetylgalactosamine-undecaprenyl-phosphate N-acetylgalactosaminephosphotransferase (wecA).